The sequence spans 269 residues: Energy-coupling factor transporter transmembrane protein EcfT (269 aa).

The next 5 helical transmembrane spans lie at 28-48 (MIIYIIIIFWANNVVTNLLLL), 49-69 (AFTLLLIFLSQIKWSFFFNGV), 73-93 (IGIILFTTLFQVFFTQGGSVL), 109-129 (AILIFMRFVLIIFFSTLLTLT), and 246-266 (TLAIILVVILGIFLFCLKSPS).

It belongs to the energy-coupling factor EcfT family. Forms a stable energy-coupling factor (ECF) transporter complex composed of 2 membrane-embedded substrate-binding proteins (S component), 2 ATP-binding proteins (A component) and 2 transmembrane proteins (T component). May be able to interact with more than 1 S component at a time.

Its subcellular location is the cell membrane. Functionally, transmembrane (T) component of an energy-coupling factor (ECF) ABC-transporter complex. Unlike classic ABC transporters this ECF transporter provides the energy necessary to transport a number of different substrates. The protein is Energy-coupling factor transporter transmembrane protein EcfT of Streptococcus equi subsp. equi (strain 4047).